Here is a 457-residue protein sequence, read N- to C-terminus: tRNA modification GTPase MnmE (457 aa).

3 residues coordinate (6S)-5-formyl-5,6,7,8-tetrahydrofolate: arginine 24, glutamate 81, and lysine 121. Residues 218–380 form the TrmE-type G domain; it reads GIKIVITGKP…LLKYLTKIIS (163 aa). A K(+)-binding site is contributed by asparagine 228. GTP is bound by residues 228–233, 247–253, 272–275, and 338–341; these read NVGKSS, TNIAGTT, DTAG, and NKAD. Serine 232 serves as a coordination point for Mg(2+). Threonine 247, isoleucine 249, and threonine 252 together coordinate K(+). Threonine 253 provides a ligand contact to Mg(2+). A (6S)-5-formyl-5,6,7,8-tetrahydrofolate-binding site is contributed by lysine 457.

The protein belongs to the TRAFAC class TrmE-Era-EngA-EngB-Septin-like GTPase superfamily. TrmE GTPase family. Homodimer. Heterotetramer of two MnmE and two MnmG subunits. K(+) is required as a cofactor.

Its subcellular location is the cytoplasm. In terms of biological role, exhibits a very high intrinsic GTPase hydrolysis rate. Involved in the addition of a carboxymethylaminomethyl (cmnm) group at the wobble position (U34) of certain tRNAs, forming tRNA-cmnm(5)s(2)U34. In Baumannia cicadellinicola subsp. Homalodisca coagulata, this protein is tRNA modification GTPase MnmE.